The following is a 116-amino-acid chain: UPF0342 protein BH1149 (116 aa).

It belongs to the UPF0342 family.

The protein is UPF0342 protein BH1149 of Halalkalibacterium halodurans (strain ATCC BAA-125 / DSM 18197 / FERM 7344 / JCM 9153 / C-125) (Bacillus halodurans).